A 379-amino-acid chain; its full sequence is Acyl-CoA dehydrogenase (379 aa).

The protein belongs to the acyl-CoA dehydrogenase family. FAD is required as a cofactor.

The catalysed reaction is a 2,3-saturated acyl-CoA + A = a 2,3-dehydroacyl-CoA + AH2. In Bacillus subtilis (strain 168), this protein is Acyl-CoA dehydrogenase (mmgC).